We begin with the raw amino-acid sequence, 217 residues long: Redox-sensing transcriptional repressor Rex (217 aa).

Residues 17–56 constitute a DNA-binding region (H-T-H motif); it reads RYLRYVEDLLNHDVLRISSSELSQRMGYTASQVRQDFNNF. 91 to 96 serves as a coordination point for NAD(+); that stretch reads GVGNLG.

Belongs to the transcriptional regulatory Rex family. Homodimer.

It is found in the cytoplasm. Its function is as follows. Modulates transcription in response to changes in cellular NADH/NAD(+) redox state. The polypeptide is Redox-sensing transcriptional repressor Rex (Caldicellulosiruptor bescii (strain ATCC BAA-1888 / DSM 6725 / KCTC 15123 / Z-1320) (Anaerocellum thermophilum)).